A 187-amino-acid chain; its full sequence is Prepronociceptin (187 aa).

Residues 1–19 (MKILFCDVLLLSLLSSVFS) form the signal peptide. Positions 20 to 95 (SCPRDCLTCQ…QPKASEMQHL (76 aa)) are excised as a propeptide. A run of 3 repeats spans residues 109–114 (DAEPGA), 115–120 (DAEPGA), and 121–126 (DAEPGA). A 3 X 6 AA tandem repeats of D-A-E-P-G-A region spans residues 109–126 (DAEPGADAEPGADAEPGA). The tract at residues 109-133 (DAEPGADAEPGADAEPGADDAEEVE) is disordered. The span at 112–131 (PGADAEPGADAEPGADDAEE) shows a compositional bias: acidic residues. A propeptide spanning residues 180–187 (TLHQNGNV) is cleaved from the precursor.

It belongs to the opioid neuropeptide precursor family. In terms of processing, specific enzymatic cleavages at paired basic residues probably yield other active peptides besides nociceptin. Post-translationally, the N-terminal domain contains 6 conserved cysteines thought to be involved in disulfide bonding and/or processing. As to expression, brain and spinal cord. Low levels in kidney and spleen.

It localises to the secreted. Ligand of the opioid receptor-like receptor OPRL1. It may act as a transmitter in the brain by modulating nociceptive and locomotor behavior. May be involved in neuronal differentiation and development. When administered intracerebroventricularly, nociceptin induces hyperalgesia and decreases locomotor activity. In terms of biological role, blocks nociceptin action in pain transmission by inhibiting nociceptin-induced hyperalgesia and allodynia. Functionally, has potent analgesic activity. In Mus musculus (Mouse), this protein is Prepronociceptin (Pnoc).